Consider the following 485-residue polypeptide: UDP-glycosyltransferase 91D1 (485 aa).

UDP-alpha-D-glucose-binding positions include Ser-296, 355 to 356, 373 to 381, and 395 to 398; these read WA, HCGSGSIVE, and FCDQ.

This sequence belongs to the UDP-glycosyltransferase family.

Its function is as follows. May glycosylate diterpenes or flavonols in leaves. The protein is UDP-glycosyltransferase 91D1 of Stevia rebaudiana (Stevia).